We begin with the raw amino-acid sequence, 142 residues long: Large ribosomal subunit protein uL11 (142 aa).

This sequence belongs to the universal ribosomal protein uL11 family. Part of the ribosomal stalk of the 50S ribosomal subunit. Interacts with L10 and the large rRNA to form the base of the stalk. L10 forms an elongated spine to which L12 dimers bind in a sequential fashion forming a multimeric L10(L12)X complex. Post-translationally, one or more lysine residues are methylated.

Forms part of the ribosomal stalk which helps the ribosome interact with GTP-bound translation factors. This is Large ribosomal subunit protein uL11 from Thermobifida fusca (strain YX).